The sequence spans 347 residues: Succinylglutamate desuccinylase (347 aa).

Positions 64, 67, and 159 each coordinate Zn(2+). The active site involves Glu-222.

It belongs to the AspA/AstE family. Succinylglutamate desuccinylase subfamily. Requires Zn(2+) as cofactor.

It catalyses the reaction N-succinyl-L-glutamate + H2O = L-glutamate + succinate. It functions in the pathway amino-acid degradation; L-arginine degradation via AST pathway; L-glutamate and succinate from L-arginine: step 5/5. In terms of biological role, transforms N(2)-succinylglutamate into succinate and glutamate. In Burkholderia cenocepacia (strain ATCC BAA-245 / DSM 16553 / LMG 16656 / NCTC 13227 / J2315 / CF5610) (Burkholderia cepacia (strain J2315)), this protein is Succinylglutamate desuccinylase.